The following is a 117-amino-acid chain: UPF0102 protein YE3728 (117 aa).

This sequence belongs to the UPF0102 family.

This is UPF0102 protein YE3728 from Yersinia enterocolitica serotype O:8 / biotype 1B (strain NCTC 13174 / 8081).